The following is a 127-amino-acid chain: uncharacterized protein (127 aa).

In terms of domain architecture, VOC spans 1–127 (MKIVVTSIFV…CGNLIQIVQK (127 aa)).

It belongs to the glyoxalase I family.

This is an uncharacterized protein from Bacillus subtilis (strain 168).